We begin with the raw amino-acid sequence, 526 residues long: Efflux pump aunC (526 aa).

A run of 14 helical transmembrane segments spans residues Leu23–Leu43, Asp64–Gly84, Phe89–Ile109, Val125–Val145, Gly155–Phe175, Trp183–Phe203, Ala218–Leu238, Ile254–Trp274, Leu296–Phe316, Val339–Met359, Leu360–Ser380, Ile386–Val406, Thr418–Ala438, and Val491–Ile511.

It belongs to the major facilitator superfamily. TCR/Tet family.

Its subcellular location is the cell membrane. In terms of biological role, efflux pump; part of the gene cluster that mediates the biosynthesis of aurasperone B, a dimeric gamma-naphthopyrone. This Aspergillus niger (strain ATCC 1015 / CBS 113.46 / FGSC A1144 / LSHB Ac4 / NCTC 3858a / NRRL 328 / USDA 3528.7) protein is Efflux pump aunC.